Here is a 132-residue protein sequence, read N- to C-terminus: Interleukin-13 (132 aa).

The signal sequence occupies residues 1–18 (MALLLTMVIALTCLGGFA). Residues Asn-38, Asn-49, Asn-57, and Asn-72 are each glycosylated (N-linked (GlcNAc...) asparagine). 2 disulfides stabilise this stretch: Cys-48–Cys-76 and Cys-64–Cys-90.

This sequence belongs to the IL-4/IL-13 family. In terms of assembly, interacts with IL13RA2.

The protein localises to the secreted. Cytokine that plays important roles in allergic inflammation and immune response to parasite infection. Synergizes with IL2 in regulating interferon-gamma synthesis. Stimulates B-cell proliferation, and activation of eosinophils, basophils, and mast cells. Plays an important role in controlling IL33 activity by modulating the production of transmembrane and soluble forms of interleukin-1 receptor-like 1/IL1RL1. Displays the capacity to antagonize Th1-driven proinflammatory immune response and downregulates synthesis of many proinflammatory cytokines including IL1, IL6, IL10, IL12 and TNF-alpha through a mechanism that partially involves suppression of NF-kappa-B. Also functions on nonhematopoietic cells, including endothelial cells where it induces vascular cell adhesion protein 1/VCAM1, which is important in the recruitment of eosinophils. Exerts its biological effects through its receptors which comprises the IL4R chain and the IL13RA1 chain, to activate JAK1 and TYK2, leading to the activation of STAT6. Aside from IL13RA1, another receptor IL13RA2 acts as a high affinity decoy for IL13 and mediates internalization and depletion of extracellular IL13. In Macaca thibetana (Pere David's macaque), this protein is Interleukin-13 (IL13).